We begin with the raw amino-acid sequence, 62 residues long: Photosystem II reaction center protein Z (62 aa).

Helical transmembrane passes span 8 to 28 (AVFALIATSSILLISVPVVFA) and 41 to 61 (FSGTSLWIGLVFLVGILNSLI).

The protein belongs to the PsbZ family. PSII is composed of 1 copy each of membrane proteins PsbA, PsbB, PsbC, PsbD, PsbE, PsbF, PsbH, PsbI, PsbJ, PsbK, PsbL, PsbM, PsbT, PsbY, PsbZ, Psb30/Ycf12, at least 3 peripheral proteins of the oxygen-evolving complex and a large number of cofactors. It forms dimeric complexes.

It is found in the plastid. The protein localises to the chloroplast thylakoid membrane. May control the interaction of photosystem II (PSII) cores with the light-harvesting antenna, regulates electron flow through the 2 photosystem reaction centers. PSII is a light-driven water plastoquinone oxidoreductase, using light energy to abstract electrons from H(2)O, generating a proton gradient subsequently used for ATP formation. The protein is Photosystem II reaction center protein Z of Vitis vinifera (Grape).